Reading from the N-terminus, the 714-residue chain is Transcription factor SFL2 (714 aa).

A DNA-binding region spans residues 15–134; the sequence is AFVHKLYTML…LVYIKRRSSS (120 aa). 3 disordered regions span residues 187–467, 565–658, and 670–714; these read YYQQ…VGVT, STSV…NNTN, and SHSQ…NMNK. Pro residues-rich tracts occupy residues 193–207 and 223–235; these read GQVP…PPHQ and QPPP…PPQP. Residues 266–275 are compositionally biased toward polar residues; sequence LDQTQPLSYT. Low complexity predominate over residues 276-285; the sequence is PQLEYQQQQY. Residues 286-296 show a composition bias toward pro residues; sequence PQPPLPPPPPQ. 2 stretches are compositionally biased toward polar residues: residues 310–321 and 354–372; these read DNLSRPSPNEQH and SEGS…LNNE. Over residues 376-389 the composition is skewed to low complexity; the sequence is ESSTSSSSTTVTST. 2 stretches are compositionally biased toward polar residues: residues 413–435 and 444–461; these read SRMN…TQNG and LIPS…TGTD. Over residues 574-591 the composition is skewed to low complexity; that stretch reads GPFSTSTSTSTTSPTLSS. Residues 599 to 608 are compositionally biased toward polar residues; it reads EPQNSTIANG. Composition is skewed to low complexity over residues 609 to 641 and 648 to 658; these read TSIR…RQLS and QQQQQPNNNTN. The segment covering 703-714 has biased composition (basic and acidic residues); that stretch reads SKSDDDTDNMNK.

It belongs to the HSF family.

It localises to the nucleus. Its function is as follows. Transcription factor that plays a role of activator of filamentous growth and which is involved in invasive growth at a high temperature. Required for human oral epithelium colonization and damage. Promotes filamentous growth in EFG1- and FLO8-dependent manners. Antagonizes functions of SFL1. The protein is Transcription factor SFL2 (SFL2) of Candida albicans (strain SC5314 / ATCC MYA-2876) (Yeast).